The sequence spans 2450 residues: Tetratricopeptide repeat protein 28 (2450 aa).

M1 bears the N-acetylmethionine mark. The tract at residues 1-36 (MEQPPPLAPEPASARSRRRREPESPPAPIPLFGART) is disordered. S24 carries the post-translational modification Phosphoserine. 28 TPR repeats span residues 52 to 85 (FVEK…DPQN), 87 to 119 (ILYS…NPKW), 120 to 153 (PKAY…DPKS), 190 to 223 (FVVV…GTCS), 228 to 261 (GSVF…AKTL), 268 to 301 (CRAH…AMKL), 308 to 341 (SSAL…AKQS), 348 to 381 (AREL…AKDL), 388 to 421 (ARAY…AQEL), 428 to 461 (MRAY…AEDL), 468 to 501 (GRAS…AQEL), 508 to 541 (GRAY…SMEV), 548 to 581 (ASTH…AREL), 588 to 621 (ARAL…APDL), 628 to 661 (GKVC…AKDL), 668 to 701 (AKAY…AQSL), 708 to 741 (FRAL…SHHV), 748 to 781 (ASAY…YQEL), 788 to 821 (CRAH…GRKL), 828 to 861 (AQVY…LQQL), 871 to 904 (GRAY…AQSL), 911 to 944 (AKAY…AHEL), 951 to 984 (AQAY…ARDM), 991 to 1024 (SDAA…AEET), 1031 to 1064 (GRAY…AAQM), 1071 to 1104 (TVSY…AEQL), 1111 to 1144 (AKIR…FETI), and 1163 to 1196 (TSSY…AFAD). The disordered stretch occupies residues 1362–1381 (SGTVSPSKDGTSSLPRRQNS). Residues S1584 and S2098 each carry the phosphoserine modification. Residues 2001 to 2364 (KPEGGLEGGG…GTLTSKRDVL (364 aa)) are disordered. Over residues 2090-2116 (SVSSKGSVSTPNSPVKMTLIPSPNSPF) the composition is skewed to polar residues. The span at 2124-2140 (SSDTGESDQSSTETDST) shows a compositional bias: low complexity. Residues 2143–2153 (SQEESTPKLDP) are compositionally biased toward basic and acidic residues. Positions 2191–2206 (APSSTTVFRASETSAF) are enriched in polar residues. S2216 is modified (phosphoserine). Polar residues predominate over residues 2229–2245 (ARSSSLPKVSSPATSEV). 2 stretches are compositionally biased toward low complexity: residues 2252–2262 (SPPGSSHPSPG) and 2296–2320 (SPAC…SPAD). 2 positions are modified to phosphoserine: S2365 and S2370.

Interacts with AURKB. Expressed in embryos at all stages examined. In adult tissues, detected in heart and at low levels in kidney and testis.

The protein resides in the cytoplasm. It is found in the cytoskeleton. The protein localises to the microtubule organizing center. It localises to the centrosome. Its subcellular location is the spindle. The protein resides in the spindle pole. It is found in the midbody. Its function is as follows. During mitosis, may be involved in the condensation of spindle midzone microtubules, leading to the formation of midbody. In terms of biological role, essential for the formation and integrity of the midbody. Max play a critical role in the progress of mitosis and cytokinesis during cell cycle. The sequence is that of Tetratricopeptide repeat protein 28 (Ttc28) from Mus musculus (Mouse).